Reading from the N-terminus, the 124-residue chain is Small ribosomal subunit protein uS12 (124 aa).

A disordered region spans residues 1-27 (MPTINQLIRKPRKSQTEKTASPALQNC). Polar residues predominate over residues 17–27 (EKTASPALQNC). D89 carries the 3-methylthioaspartic acid modification.

The protein belongs to the universal ribosomal protein uS12 family. Part of the 30S ribosomal subunit. Contacts proteins S8 and S17. May interact with IF1 in the 30S initiation complex.

In terms of biological role, with S4 and S5 plays an important role in translational accuracy. Functionally, interacts with and stabilizes bases of the 16S rRNA that are involved in tRNA selection in the A site and with the mRNA backbone. Located at the interface of the 30S and 50S subunits, it traverses the body of the 30S subunit contacting proteins on the other side and probably holding the rRNA structure together. The combined cluster of proteins S8, S12 and S17 appears to hold together the shoulder and platform of the 30S subunit. The protein is Small ribosomal subunit protein uS12 of Borreliella afzelii (strain PKo) (Borrelia afzelii).